We begin with the raw amino-acid sequence, 240 residues long: Uridylate kinase (240 aa).

13 to 16 (KLSG) lines the ATP pocket. An involved in allosteric activation by GTP region spans residues 21–26 (GDDGFG). Residue Gly-55 coordinates UMP. Residues Gly-56 and Arg-60 each contribute to the ATP site. UMP-binding positions include Asp-75 and 136–143 (IGNPYFST). ATP-binding residues include Asn-164, Tyr-170, and Asp-173.

The protein belongs to the UMP kinase family. In terms of assembly, homohexamer.

It is found in the cytoplasm. The enzyme catalyses UMP + ATP = UDP + ADP. The protein operates within pyrimidine metabolism; CTP biosynthesis via de novo pathway; UDP from UMP (UMPK route): step 1/1. Its activity is regulated as follows. Allosterically activated by GTP. Inhibited by UTP. In terms of biological role, catalyzes the reversible phosphorylation of UMP to UDP. This chain is Uridylate kinase, found in Staphylococcus saprophyticus subsp. saprophyticus (strain ATCC 15305 / DSM 20229 / NCIMB 8711 / NCTC 7292 / S-41).